Consider the following 158-residue polypeptide: NADH-quinone oxidoreductase subunit B (158 aa).

The [4Fe-4S] cluster site is built by Cys36, Cys37, Cys101, and Cys131.

It belongs to the complex I 20 kDa subunit family. In terms of assembly, NDH-1 is composed of 14 different subunits. Subunits NuoB, C, D, E, F, and G constitute the peripheral sector of the complex. The cofactor is [4Fe-4S] cluster.

It localises to the cell inner membrane. The enzyme catalyses a quinone + NADH + 5 H(+)(in) = a quinol + NAD(+) + 4 H(+)(out). Its function is as follows. NDH-1 shuttles electrons from NADH, via FMN and iron-sulfur (Fe-S) centers, to quinones in the respiratory chain. The immediate electron acceptor for the enzyme in this species is believed to be ubiquinone. Couples the redox reaction to proton translocation (for every two electrons transferred, four hydrogen ions are translocated across the cytoplasmic membrane), and thus conserves the redox energy in a proton gradient. The sequence is that of NADH-quinone oxidoreductase subunit B from Francisella philomiragia subsp. philomiragia (strain ATCC 25017 / CCUG 19701 / FSC 153 / O#319-036).